The primary structure comprises 122 residues: Putative iron-sulfur cluster insertion protein ErpA (122 aa).

Residues cysteine 50, cysteine 114, and cysteine 116 each contribute to the iron-sulfur cluster site.

Belongs to the HesB/IscA family. Homodimer. It depends on iron-sulfur cluster as a cofactor.

Required for insertion of 4Fe-4S clusters. This Cupriavidus necator (strain ATCC 17699 / DSM 428 / KCTC 22496 / NCIMB 10442 / H16 / Stanier 337) (Ralstonia eutropha) protein is Putative iron-sulfur cluster insertion protein ErpA.